We begin with the raw amino-acid sequence, 109 residues long: FAD assembly factor SdhE (109 aa).

The tract at residues 1–22 (MQDNFTASSPSSSSSASGVAED) is disordered. A compositionally biased stretch (low complexity) spans 7–17 (ASSPSSSSSAS).

It belongs to the SdhE FAD assembly factor family.

It localises to the cytoplasm. Its function is as follows. An FAD assembly protein, which accelerates covalent attachment of the cofactor into other proteins. Plays an essential role in the assembly of succinate dehydrogenase (SDH, respiratory complex II), an enzyme complex that is a component of both the tricarboxylic acid cycle and the electron transport chain, and which couples the oxidation of succinate to fumarate with the reduction of ubiquinone (coenzyme Q) to ubiquinol. Required for flavinylation of SdhA, when the SDH operon and this gene are overexpressed in G.oxydans. Flavinylation of SdhA is detected only in the presence of sdhE. In Acetobacter pasteurianus (strain NBRC 105184 / IFO 3283-01), this protein is FAD assembly factor SdhE.